The chain runs to 329 residues: Beta-ketoacyl-[acyl-carrier-protein] synthase III (329 aa).

Residues C112 and H253 contribute to the active site. Residues 254–258 form an ACP-binding region; it reads QANQR. Residue N283 is part of the active site.

Belongs to the thiolase-like superfamily. FabH family. As to quaternary structure, homodimer.

It is found in the cytoplasm. The catalysed reaction is malonyl-[ACP] + acetyl-CoA + H(+) = 3-oxobutanoyl-[ACP] + CO2 + CoA. The protein operates within lipid metabolism; fatty acid biosynthesis. Catalyzes the condensation reaction of fatty acid synthesis by the addition to an acyl acceptor of two carbons from malonyl-ACP. Catalyzes the first condensation reaction which initiates fatty acid synthesis and may therefore play a role in governing the total rate of fatty acid production. Possesses both acetoacetyl-ACP synthase and acetyl transacylase activities. Its substrate specificity determines the biosynthesis of branched-chain and/or straight-chain of fatty acids. The sequence is that of Beta-ketoacyl-[acyl-carrier-protein] synthase III from Gloeobacter violaceus (strain ATCC 29082 / PCC 7421).